Consider the following 53-residue polypeptide: Rubredoxin (53 aa).

Positions 1–53 (MQKFECTLCGYIYDPALVGPDTPDQDGAFEDVSENWVCPLCGAGKEDFEVYED) constitute a Rubredoxin-like domain. Positions 6, 9, 38, and 41 each coordinate Fe cation.

Belongs to the rubredoxin family. It depends on Fe(3+) as a cofactor.

Rubredoxin is a small nonheme, iron protein lacking acid-labile sulfide. Its single Fe, chelated to 4 Cys, functions as an electron acceptor and may also stabilize the conformation of the molecule. The chain is Rubredoxin from Peptoniphilus asaccharolyticus (Peptostreptococcus asaccharolyticus).